The sequence spans 311 residues: Homeobox protein CDX-2 (311 aa).

Residue serine 60 is modified to Phosphoserine. Residues 111-151 (EYHAHHHPHHHPHHPAASPSCASGLLQTLNLGPPGPAATAA) are disordered. The segment covering 114 to 124 (AHHHPHHHPHH) has biased composition (basic residues). The tract at residues 185–215 (KDKYRVVYTDHQRLELEKEFHFSRYITIRRK) is interaction with DNA. Residues 185-244 (KDKYRVVYTDHQRLELEKEFHFSRYITIRRKSELAATLGLSERQVKIWFQNRRAKERKIK) constitute a DNA-binding region (homeobox). Positions 227–241 (RQVKIWFQNRRAKER) are interaction with 5-mCpG DNA. The interval 239–311 (KERKIKKKQQ…GGVLNSTVTQ (73 aa)) is disordered. A compositionally biased stretch (low complexity) spans 248-257 (QQQQQQQQQQ). The segment covering 258–268 (PPQPPPQPSQP) has biased composition (pro residues). Phosphoserine; by CDK2 is present on serine 281. The short motif at 281–293 (SPVTSLQGSVPGS) is the 4S motif; modulates transactivation activity and protein stability element. Over residues 285–298 (SLQGSVPGSVPGVL) the composition is skewed to low complexity.

It belongs to the Caudal homeobox family. As to quaternary structure, can bind DNA as a monomer or homodimer. Post-translationally, ubiquitinated, leading to its degradation by the proteasome. Phosphorylation at Ser-60 reduces transactivation capacity. Phosphorylation at Ser-281 reduces transactivation capacity and increases ubiquitin-dependent proteasome degradation. In terms of tissue distribution, in the intestine, detected in ileum and proximal and distal colon (at protein level). In adult small intestine, predominantly localized in crypt and lower villus cells of the epithelium (at protein level). Expressed in the intestine but not detected in other tissues including stomach, liver, kidney, spleen, brain, heart, lung, pancreas, skeletal muscle and testis. Expressed specifically in gut epithelium where it is not restricted to a particular cell lineage. Abundant expression is seen in the proximal colon with slightly lower levels in distal colon. Expression in the proximal colon is not restricted either to a particular cell lineage or stage of differentiation while in the distal colon it is more abundant in the differentiated cells towards the top of the crypt.

It localises to the nucleus. Functionally, transcription factor which regulates the transcription of multiple genes expressed in the intestinal epithelium. Binds to the promoter of the intestinal sucrase-isomaltase SI and activates SI transcription. Binds to the DNA sequence 5'-ATAAAAACTTAT-3' in the promoter region of VDR and activates VDR transcription. Binds to and activates transcription of LPH. Activates transcription of CLDN2 and intestinal mucin MUC2. Binds to the 5'-AATTTTTTACAACACCT-3' DNA sequence in the promoter region of CA1 and activates CA1 transcription. Important in broad range of functions from early differentiation to maintenance of the intestinal epithelial lining of both the small and large intestine. Binds preferentially to methylated DNA. This Mus musculus (Mouse) protein is Homeobox protein CDX-2 (Cdx2).